A 115-amino-acid polypeptide reads, in one-letter code: Large ribosomal subunit protein bL19 (115 aa).

It belongs to the bacterial ribosomal protein bL19 family.

In terms of biological role, this protein is located at the 30S-50S ribosomal subunit interface and may play a role in the structure and function of the aminoacyl-tRNA binding site. The protein is Large ribosomal subunit protein bL19 of Sodalis glossinidius (strain morsitans).